The chain runs to 1280 residues: Ankyrin repeat and sterile alpha motif domain-containing protein 1B (1280 aa).

7 ANK repeats span residues 2-31 (GKEQ…GLLG), 57-86 (SGYT…STNV), 90-119 (KGCF…SHSR), 126-155 (EKET…DPSM), 159-188 (RGET…NLMS), 192-221 (RKHT…DVNT), and 224-253 (EKGS…DANI). Disordered regions lie at residues 299–322 (RHRP…LRHK), 361–399 (MESF…EEKS), 479–573 (SVSD…STGS), 704–723 (NGEA…SNTG), and 755–791 (SNLV…PSFT). Residues 482–491 (DAERGNHGDD) show a composition bias toward basic and acidic residues. Composition is skewed to polar residues over residues 520–550 (KQRT…SSLG), 707–723 (ARSN…SNTG), and 770–782 (SRGQ…SSPS). SAM domains lie at 824–890 (CPVQ…LPRV) and 898–963 (NNPT…RLHE). Disordered regions lie at residues 960–994 (RLHE…LSQA) and 1208–1243 (GSST…MDQK). Positions 980 to 994 (GNHTPPQLSPSLSQA) are enriched in polar residues. A PID domain is found at 1071–1223 (IFQSCDYEAY…ESFDSKPSKP (153 aa)).

Its subcellular location is the cytoplasm. The protein is Ankyrin repeat and sterile alpha motif domain-containing protein 1B (anks1b) of Danio rerio (Zebrafish).